Consider the following 403-residue polypeptide: MEPVGCCGECRGSSVDPRSTFVLSNLAEVVERVLTFLPAKALLRVACVCRLWRECVRRVLRTHRSVTWISAGLAEAGHLEGHCLVRVVAEELENVRILPHTVLYMADSETFISLEECRGHKRARKRTSMETALALEKLFPKQCQVLGIVTPGIVVTPMGSGSNRPQEIEIGESGFALLFPQIEGIKIQPFHFIKDPKNLTLERHQLTEVGLLDNPELRVVLVFGYNCCKVGASNYLQQVVSTFSDMNIILAGGQVDNLSSLTSEKNPLDIDASGVVGLSFSGHRIQSATVLLNEDVSDEKTAEAAMQRLKAANIPEHNTIGFMFACVGRGFQYYRAKGNVEADAFRKFFPSVPLFGFFGNGEIGCDRIVTGNFILRKCNEVKDDDLFHSYTTIMALIHLGSSK.

Residue Met1 is modified to N-acetylmethionine. In terms of domain architecture, F-box spans 21-67 (FVLSNLAEVVERVLTFLPAKALLRVACVCRLWRECVRRVLRTHRSVT). Phosphothreonine is present on Thr127. Ser128 is modified (phosphoserine). At Lys194 the chain carries N6-acetyllysine.

Directly interacts with SKP1 and CUL1. Interacts (via C-terminal) with KDM4A. Interacts with TP53. Interacts with MTOR; this interaction promotes 'lys-27'-linked ubiquitination of MTOR. In terms of assembly, (Microbial infection) Interacts with SARS_COV-2 protein NSP5; this interaction attenuates NSP5-mediated inhibition of innate immunity. Post-translationally, phosphorylated by EIF2AK4 at Thr-127 causes cytoplasmic retention of FBXO22. In terms of tissue distribution, predominantly expressed in liver, also enriched in cardiac muscle.

The protein resides in the cytoplasm. It is found in the nucleus. Its subcellular location is the myofibril. It localises to the sarcomere. The protein localises to the z line. Its function is as follows. Substrate-recognition component of the SCF (SKP1-CUL1-F-box protein)-type E3 ubiquitin ligase complex that is implicated in the control of various cellular processes such as cell cycle control, transcriptional regulation, DNA damage repair, and apoptosis. Promotes the proteasome-dependent degradation of key sarcomeric proteins, such as alpha-actinin (ACTN2) and filamin-C (FLNC), essential for maintenance of normal contractile function. Acts as a key regulator of histone methylation marks namely H3K9 and H3K36 methylation through the regulation of histone demethylase KDM4A protein levels. In complex with KDM4A, also regulates the abundance of TP53 by targeting methylated TP53 for degradation at the late senescent stage. Under oxidative stress, promotes the ubiquitination and degradation of BACH1. Mechanistically, reactive oxygen species (ROS) covalently modify cysteine residues on the bZIP domain of BACH1, leading to its release from chromatin and making it accessible to FBXO22. Upon amino acid depletion, mediates 'Lys-27'-linked ubiquitination of MTOR and thereby inhibits substrate recruitment to mTORC1. Also inhibits SARS-CoV-2 replication by inducing NSP5 degradation. This chain is F-box only protein 22 (FBXO22), found in Homo sapiens (Human).